A 138-amino-acid chain; its full sequence is Putative pre-16S rRNA nuclease (138 aa).

The protein belongs to the YqgF nuclease family.

It is found in the cytoplasm. In terms of biological role, could be a nuclease involved in processing of the 5'-end of pre-16S rRNA. The protein is Putative pre-16S rRNA nuclease of Salmonella schwarzengrund (strain CVM19633).